The primary structure comprises 387 residues: F-box protein At5g41490 (387 aa).

An F-box domain is found at 2–47; that stretch reads ATMITNLRRDLIEEIISRVPLRSMKAVRLTCKSWNNISKSEIFTKM.

This chain is F-box protein At5g41490, found in Arabidopsis thaliana (Mouse-ear cress).